The following is a 165-amino-acid chain: Hemolysin, heat labile (165 aa).

C151 and C161 form a disulfide bridge.

It belongs to the TDH hemolysin family. Homodimer.

Its function is as follows. Bacterial hemolysins are exotoxins that attack blood cell membranes and cause cell rupture by mechanisms not clearly defined. This chain is Hemolysin, heat labile, found in Grimontia hollisae (Vibrio hollisae).